Reading from the N-terminus, the 331-residue chain is Fructose-1,6-bisphosphatase class 1 2 (331 aa).

The Mg(2+) site is built by Glu91, Asp112, Leu114, and Asp115. Residues 115 to 118 (DGSS), Asn207, Tyr238, and Lys268 each bind substrate. Glu274 contributes to the Mg(2+) binding site.

It belongs to the FBPase class 1 family. In terms of assembly, homotetramer. It depends on Mg(2+) as a cofactor.

Its subcellular location is the cytoplasm. It carries out the reaction beta-D-fructose 1,6-bisphosphate + H2O = beta-D-fructose 6-phosphate + phosphate. Its pathway is carbohydrate biosynthesis; Calvin cycle. The polypeptide is Fructose-1,6-bisphosphatase class 1 2 (Acaryochloris marina (strain MBIC 11017)).